The chain runs to 346 residues: Protein RecA (346 aa).

64–71 serves as a coordination point for ATP; the sequence is GPESSGKT.

It belongs to the RecA family.

It localises to the cytoplasm. In terms of biological role, can catalyze the hydrolysis of ATP in the presence of single-stranded DNA, the ATP-dependent uptake of single-stranded DNA by duplex DNA, and the ATP-dependent hybridization of homologous single-stranded DNAs. It interacts with LexA causing its activation and leading to its autocatalytic cleavage. This chain is Protein RecA, found in Bacillus pumilus (strain SAFR-032).